The primary structure comprises 386 residues: MRIFKSHPLLRLVNSYVIDSPTPSNLSYLWNFGSLLALCLIIQIVTGVTLAMHYTPSVAEAFNSVEHIMRDVNNGWLIRYLHANTASAFFFLVYLHVGRGIYYGSYKAPRTLTWIIGSIILIVMMATAFLGYVLPYGQMSLWGATVITNLMSAIPWIGQDIVEFLWGGFSVNNATLNRFFALHFVLPFVLAALVIMHLISYHETVGSGNPLGISSNYDRLPFAPYYIFKDLITIFLFFFVLSLFVFFMPNALGDSENYVMANPMQTPPAIVPEWYLLPFYAILRSIPNKLLGVIAMFSAILIILVMPITDLSKYRGLQFRPLSKVAFYVFVANFLILMQLGAKHVESPFIEFGQISTVLYFSHFLVIMPLVSFIENTLVELITKKS.

4 helical membrane passes run 32–52, 76–98, 113–133, and 179–199; these read FGSL…TLAM, WLIR…LHVG, TWII…LGYV, and FFAL…MHLI. Residues His82 and His96 each contribute to the heme b site. His183 and His197 together coordinate heme b. His202 contributes to the a ubiquinone binding site. Transmembrane regions (helical) follow at residues 226-246, 290-310, 322-342, and 349-369; these read YIFK…LFVF, LLGV…PITD, LSKV…QLGA, and FIEF…VIMP.

Belongs to the cytochrome b family. Fungal cytochrome b-c1 complex contains 10 subunits; 3 respiratory subunits, 2 core proteins and 5 low-molecular weight proteins. Cytochrome b-c1 complex is a homodimer. It depends on heme b as a cofactor.

Its subcellular location is the mitochondrion inner membrane. In terms of biological role, component of the ubiquinol-cytochrome c reductase complex (complex III or cytochrome b-c1 complex) that is part of the mitochondrial respiratory chain. The b-c1 complex mediates electron transfer from ubiquinol to cytochrome c. Contributes to the generation of a proton gradient across the mitochondrial membrane that is then used for ATP synthesis. This chain is Cytochrome b (cob), found in Talaromyces marneffei (Penicillium marneffei).